The sequence spans 588 residues: Methylcrotonoyl-CoA carboxylase beta chain, mitochondrial (588 aa).

The CoA carboxyltransferase N-terminal domain maps to 72–329; the sequence is MNSTLKQLKE…KKQPSPVITE (258 aa). A carboxyltransferase region spans residues 72–570; the sequence is MNSTLKQLKE…RKVIALSLSA (499 aa). The region spanning 329–570 is the CoA carboxyltransferase C-terminal domain; that stretch reads ETEEPLYPTS…RKVIALSLSA (242 aa). An acyl-CoA binding region spans residues 366–395; that stretch reads RFDEFKELYGTTLICGFARVHGMPVGIIAN.

This sequence belongs to the AccD/PCCB family. In terms of assembly, probably a dodecamer composed of six biotin-containing alpha subunits and six beta subunits.

It is found in the mitochondrion matrix. It catalyses the reaction 3-methylbut-2-enoyl-CoA + hydrogencarbonate + ATP = 3-methyl-(2E)-glutaconyl-CoA + ADP + phosphate + H(+). It functions in the pathway amino-acid degradation; L-leucine degradation; (S)-3-hydroxy-3-methylglutaryl-CoA from 3-isovaleryl-CoA: step 2/3. Carboxyltransferase subunit of the 3-methylcrotonyl-CoA carboxylase, an enzyme that catalyzes the conversion of 3-methylcrotonyl-CoA to 3-methylglutaconyl-CoA, a critical step for leucine and isovaleric acid catabolism. The sequence is that of Methylcrotonoyl-CoA carboxylase beta chain, mitochondrial (mccb) from Dictyostelium discoideum (Social amoeba).